The following is a 455-amino-acid chain: Serine--tRNA ligase (455 aa).

Thr252–Glu254 is an L-serine binding site. ATP-binding positions include Arg283–Glu285 and Val299. Glu306 contacts L-serine. Residue Glu370 to Ser373 coordinates ATP. Residue Thr406 participates in L-serine binding.

Belongs to the class-II aminoacyl-tRNA synthetase family. Type-1 seryl-tRNA synthetase subfamily. As to quaternary structure, homodimer. The tRNA molecule binds across the dimer.

The protein resides in the cytoplasm. The enzyme catalyses tRNA(Ser) + L-serine + ATP = L-seryl-tRNA(Ser) + AMP + diphosphate + H(+). It carries out the reaction tRNA(Sec) + L-serine + ATP = L-seryl-tRNA(Sec) + AMP + diphosphate + H(+). It participates in aminoacyl-tRNA biosynthesis; selenocysteinyl-tRNA(Sec) biosynthesis; L-seryl-tRNA(Sec) from L-serine and tRNA(Sec): step 1/1. Its function is as follows. Catalyzes the attachment of serine to tRNA(Ser). Is also able to aminoacylate tRNA(Sec) with serine, to form the misacylated tRNA L-seryl-tRNA(Sec), which will be further converted into selenocysteinyl-tRNA(Sec). This Pyrococcus abyssi (strain GE5 / Orsay) protein is Serine--tRNA ligase.